Consider the following 244-residue polypeptide: 1-(5-phosphoribosyl)-5-[(5-phosphoribosylamino)methylideneamino] imidazole-4-carboxamide isomerase (244 aa).

D7 functions as the Proton acceptor in the catalytic mechanism. The Proton donor role is filled by D129.

The protein belongs to the HisA/HisF family.

It is found in the cytoplasm. The enzyme catalyses 1-(5-phospho-beta-D-ribosyl)-5-[(5-phospho-beta-D-ribosylamino)methylideneamino]imidazole-4-carboxamide = 5-[(5-phospho-1-deoxy-D-ribulos-1-ylimino)methylamino]-1-(5-phospho-beta-D-ribosyl)imidazole-4-carboxamide. Its pathway is amino-acid biosynthesis; L-histidine biosynthesis; L-histidine from 5-phospho-alpha-D-ribose 1-diphosphate: step 4/9. The sequence is that of 1-(5-phosphoribosyl)-5-[(5-phosphoribosylamino)methylideneamino] imidazole-4-carboxamide isomerase from Pseudoalteromonas atlantica (strain T6c / ATCC BAA-1087).